A 370-amino-acid chain; its full sequence is MSNQHTLLISNLLPVGSNISTWWNFGSMLLTCMALQTSTGFFLAIHYTANINLAFSSVTHILRDVPYGWIMQNLHAIGASLFFICIYTHIARGLYYGLYLNKWVWLSGTILLIILMATAFFGYVLPWGQMSFWAATVITNLLTAIPYLGPTLTTWLWGGFSINDPTLTRFFALHFILPFLIISLSSIHIVLLHNEGSNNPLGTNPDIDKIPFHPYHSYKDMLMATTMITMLFITMSFMPNLFNDPENFSKANPLVTPQHIKPEWYFLFAYGILRSIPNKLGGTLALLMSVIILTAPPFTHTSHVRPMTFRPLTQILFWMLIATFITITWTATKPVEPPFITISQMASTXYFLFFIINPILGWIENKIINK.

4 helical membrane passes run 25 to 45 (FGSM…FLAI), 69 to 90 (WIMQ…YTHI), 105 to 125 (WLSG…GYVL), and 170 to 190 (FFAL…IHIV). Residues His-75 and His-89 each coordinate heme b. The heme b site is built by His-174 and His-188. Residue His-193 coordinates a ubiquinone. A run of 4 helical transmembrane segments spans residues 218-238 (YKDM…MSFM), 280-300 (LGGT…PFTH), 312-332 (LTQI…WTAT), and 339-358 (FITI…IINP).

This sequence belongs to the cytochrome b family. The cytochrome bc1 complex contains 3 respiratory subunits (MT-CYB, CYC1 and UQCRFS1), 2 core proteins (UQCRC1 and UQCRC2) and probably 6 low-molecular weight proteins. Heme b serves as cofactor.

The protein resides in the mitochondrion inner membrane. In terms of biological role, component of the ubiquinol-cytochrome c reductase complex (complex III or cytochrome b-c1 complex) that is part of the mitochondrial respiratory chain. The b-c1 complex mediates electron transfer from ubiquinol to cytochrome c. Contributes to the generation of a proton gradient across the mitochondrial membrane that is then used for ATP synthesis. This is Cytochrome b (MT-CYB) from Micropechis ikaheca (New Guinean small-eyed snake).